The following is a 401-amino-acid chain: Phosrestin-1 (401 aa).

Ser-366 carries the phosphoserine; by CaMK modification.

This sequence belongs to the arrestin family. Phosphorylated upon light exposure. As to expression, expressed in photoreceptor cells.

It is found in the cell projection. It localises to the rhabdomere. Functionally, regulates photoreceptor cell deactivation. Arr1 and Arr2 proteins are mediators of rhodopsin inactivation and are essential for the termination of the phototransduction cascade. Involved in regulating normal cycles of per nuclear accumulation in brain circadian neurons and thus is important for normal circadian behavior. In the dark, functions with Arr1 to promote the formation of cytosolic Bdbt foci, which are required for dco localization to photoreceptor nuclei where it phosphorylates and activates degradation of per. This is Phosrestin-1 (Arr2) from Drosophila melanogaster (Fruit fly).